The primary structure comprises 431 residues: Adenylosuccinate lyase (431 aa).

Residues 4 to 5, 67 to 69, and 93 to 94 contribute to the N(6)-(1,2-dicarboxyethyl)-AMP site; these read RY, RHD, and TS. His-141 (proton donor/acceptor) is an active-site residue. Gln-212 provides a ligand contact to N(6)-(1,2-dicarboxyethyl)-AMP. Ser-262 functions as the Proton donor/acceptor in the catalytic mechanism. N(6)-(1,2-dicarboxyethyl)-AMP-binding positions include Ser-263, 268–270, Asn-276, and 307–311; these read KRN and SAERI.

It belongs to the lyase 1 family. Adenylosuccinate lyase subfamily. Homotetramer. Residues from neighboring subunits contribute catalytic and substrate-binding residues to each active site.

The catalysed reaction is N(6)-(1,2-dicarboxyethyl)-AMP = fumarate + AMP. The enzyme catalyses (2S)-2-[5-amino-1-(5-phospho-beta-D-ribosyl)imidazole-4-carboxamido]succinate = 5-amino-1-(5-phospho-beta-D-ribosyl)imidazole-4-carboxamide + fumarate. Its pathway is purine metabolism; AMP biosynthesis via de novo pathway; AMP from IMP: step 2/2. The protein operates within purine metabolism; IMP biosynthesis via de novo pathway; 5-amino-1-(5-phospho-D-ribosyl)imidazole-4-carboxamide from 5-amino-1-(5-phospho-D-ribosyl)imidazole-4-carboxylate: step 2/2. Its function is as follows. Catalyzes two reactions in de novo purine nucleotide biosynthesis. Catalyzes the breakdown of 5-aminoimidazole- (N-succinylocarboxamide) ribotide (SAICAR or 2-[5-amino-1-(5-phospho-beta-D-ribosyl)imidazole-4-carboxamido]succinate) to 5-aminoimidazole-4-carboxamide ribotide (AICAR or 5-amino-1-(5-phospho-beta-D-ribosyl)imidazole-4-carboxamide) and fumarate, and of adenylosuccinate (ADS or N(6)-(1,2-dicarboxyethyl)-AMP) to adenosine monophosphate (AMP) and fumarate. Influences the affinity of glutamyl--tRNA ligase for its substrates and increases its thermostability. This is Adenylosuccinate lyase (purB) from Bacillus subtilis (strain 168).